Consider the following 220-residue polypeptide: Histone deacetylase complex subunit SAP30 (220 aa).

Residues 1 to 129 are interaction with NCOR1; the sequence is MNGFTPDEMS…QSVRNRRKRK (129 aa). Thr5 carries the phosphothreonine modification. Residues 67-115 form an Atypical zinc finger; sequence CCLREDGERCGRAAGNASFSKRIQKSISQKKVKIELDKSARHLYICDYH. Lys87 participates in a covalent cross-link: Glycyl lysine isopeptide (Lys-Gly) (interchain with G-Cter in SUMO2). A disordered region spans residues 123–143; it reads RNRRKRKGSDDDGGDSPVQDI. The interval 130-220 is interaction with SIN3A; it reads GSDDDGGDSP…SDLKVDSGVH (91 aa). Ser131 and Ser138 each carry phosphoserine. A Phosphothreonine modification is found at Thr145. Glycyl lysine isopeptide (Lys-Gly) (interchain with G-Cter in SUMO2) cross-links involve residues Lys194, Lys205, and Lys214.

The protein belongs to the SAP30 family. In terms of assembly, component of the histone deacetylase complex that includes at least SIN3A, HDAC1 and HDAC2. Found in a complex composed of at least SINHCAF, SIN3A, HDAC1, SAP30, RBBP4, OGT and TET1. Interacts with HDAC1. Interacts with SIN3A, SIN3B, HDAC2, RBBP4 and NCOR1. Interacts with SAMSN1. Interacts with HCFC1. Interacts with SAP30BP. In terms of tissue distribution, expressed in all tissues tested with highest levels in pancreas, ovary, PBL, spleen and thymus; lowest levels in brain, placenta, lung and kidney.

The protein resides in the nucleus. Functionally, involved in the functional recruitment of the Sin3-histone deacetylase complex (HDAC) to a specific subset of N-CoR corepressor complexes. Capable of transcription repression by N-CoR. Active in deacetylating core histone octamers (when in a complex) but inactive in deacetylating nucleosomal histones. In terms of biological role, (Microbial infection) Involved in transcriptional repression of HHV-1 genes TK and gC. This chain is Histone deacetylase complex subunit SAP30, found in Homo sapiens (Human).